Consider the following 640-residue polypeptide: Tyrosine--tRNA ligase, mitochondrial (640 aa).

Residue tyrosine 100 coordinates L-tyrosine. Aspartate 104 provides a ligand contact to ATP. The 'HIGH' region motif lies at 105 to 114 (PTAPSLHIGH). Residues aspartate 144, tyrosine 248, glutamine 252, aspartate 255, and glutamine 274 each coordinate L-tyrosine. Positions 322–326 (KFGKS) match the 'KMSKS' region motif. Lysine 325 is an ATP binding site.

Belongs to the class-I aminoacyl-tRNA synthetase family.

The protein resides in the mitochondrion matrix. It catalyses the reaction tRNA(Tyr) + L-tyrosine + ATP = L-tyrosyl-tRNA(Tyr) + AMP + diphosphate + H(+). In terms of biological role, has both an aminoacyl-tRNA synthetase activity and is involved in the splicing of group I introns. In Podospora anserina (Pleurage anserina), this protein is Tyrosine--tRNA ligase, mitochondrial (YTS1).